A 176-amino-acid chain; its full sequence is Baseplate protein I (176 aa).

This sequence belongs to the P2likevirus gpI protein family.

The protein resides in the virion. In terms of biological role, baseplate protein that may be part of the wedges of the baseplate. Plays a role in tail assembly. The protein is Baseplate protein I (I) of Escherichia phage P2 (Bacteriophage P2).